Here is a 386-residue protein sequence, read N- to C-terminus: Homoserine O-succinyltransferase (386 aa).

The AB hydrolase-1 domain maps to Asn49–Leu358. The Nucleophile role is filled by Ser156. Arg226 serves as a coordination point for substrate. Catalysis depends on residues Asp321 and His354. Position 355 (Asp355) interacts with substrate.

The protein belongs to the AB hydrolase superfamily. MetX family. Homodimer.

Its subcellular location is the cytoplasm. The catalysed reaction is L-homoserine + succinyl-CoA = O-succinyl-L-homoserine + CoA. It participates in amino-acid biosynthesis; L-methionine biosynthesis via de novo pathway; O-succinyl-L-homoserine from L-homoserine: step 1/1. Its function is as follows. Transfers a succinyl group from succinyl-CoA to L-homoserine, forming succinyl-L-homoserine. The sequence is that of Homoserine O-succinyltransferase from Acinetobacter baumannii (strain ACICU).